A 78-amino-acid chain; its full sequence is UPF0270 protein YPTB3725 (78 aa).

This sequence belongs to the UPF0270 family.

This is UPF0270 protein YPTB3725 from Yersinia pseudotuberculosis serotype I (strain IP32953).